The primary structure comprises 424 residues: CAAX prenyl protease 1 homolog (424 aa).

5 consecutive transmembrane segments (helical) span residues 3–23 (IPFM…ETYL), 67–87 (EFVT…PWFW), 109–129 (LSFL…FSLY), 155–175 (GTFL…FIVQ), and 185–205 (LWAF…VLIA). Residue His-284 coordinates Zn(2+). The active site involves Glu-285. His-288 provides a ligand contact to Zn(2+). 2 helical membrane-spanning segments follow: residues 295–315 (TYSF…YTLV) and 332–352 (VLIG…LVSF). Glu-362 lines the Zn(2+) pocket. Catalysis depends on Asp-366, which acts as the Proton donor.

Belongs to the peptidase M48A family. Requires Zn(2+) as cofactor. Expressed in leaves, stems and flowers.

The protein resides in the endoplasmic reticulum membrane. The enzyme catalyses Hydrolyzes the peptide bond -P2-(S-farnesyl or geranylgeranyl)C-P1'-P2'-P3'-COOH where P1' and P2' are amino acids with aliphatic side chains and P3' is any C-terminal residue.. In terms of biological role, proteolytically removes the C-terminal three residues of farnesylated proteins. The substrate specificity is only partially overlapping with that of FACE2. This chain is CAAX prenyl protease 1 homolog (FACE1), found in Arabidopsis thaliana (Mouse-ear cress).